A 398-amino-acid chain; its full sequence is Histidinol-phosphate aminotransferase (398 aa).

The segment covering 1–10 has biased composition (polar residues); the sequence is MTGQRATPQP. The disordered stretch occupies residues 1–30; that stretch reads MTGQRATPQPTLDDLPLRDDLRGKSPYGAP. Residue Lys234 is modified to N6-(pyridoxal phosphate)lysine.

Belongs to the class-II pyridoxal-phosphate-dependent aminotransferase family. Histidinol-phosphate aminotransferase subfamily. As to quaternary structure, homodimer. The cofactor is pyridoxal 5'-phosphate.

It carries out the reaction L-histidinol phosphate + 2-oxoglutarate = 3-(imidazol-4-yl)-2-oxopropyl phosphate + L-glutamate. It participates in amino-acid biosynthesis; L-histidine biosynthesis; L-histidine from 5-phospho-alpha-D-ribose 1-diphosphate: step 7/9. The protein is Histidinol-phosphate aminotransferase of Mycobacterium avium (strain 104).